The primary structure comprises 176 residues: Adenine phosphoribosyltransferase (176 aa).

The protein belongs to the purine/pyrimidine phosphoribosyltransferase family. Homodimer.

It localises to the cytoplasm. The catalysed reaction is AMP + diphosphate = 5-phospho-alpha-D-ribose 1-diphosphate + adenine. It participates in purine metabolism; AMP biosynthesis via salvage pathway; AMP from adenine: step 1/1. Functionally, catalyzes a salvage reaction resulting in the formation of AMP, that is energically less costly than de novo synthesis. This chain is Adenine phosphoribosyltransferase, found in Thermobifida fusca (strain YX).